The primary structure comprises 316 residues: Ribosomal protein L11 methyltransferase (316 aa).

S-adenosyl-L-methionine contacts are provided by T157, G178, D200, and N243.

Belongs to the methyltransferase superfamily. PrmA family.

Its subcellular location is the cytoplasm. It catalyses the reaction L-lysyl-[protein] + 3 S-adenosyl-L-methionine = N(6),N(6),N(6)-trimethyl-L-lysyl-[protein] + 3 S-adenosyl-L-homocysteine + 3 H(+). Functionally, methylates ribosomal protein L11. The sequence is that of Ribosomal protein L11 methyltransferase from Streptococcus pneumoniae serotype 4 (strain ATCC BAA-334 / TIGR4).